The following is a 170-amino-acid chain: Acireductone dioxygenase (170 aa).

Fe(2+) contacts are provided by His-99, His-101, Glu-105, and His-144. Positions 99, 101, 105, and 144 each coordinate Ni(2+).

Belongs to the acireductone dioxygenase (ARD) family. In terms of assembly, monomer. Fe(2+) is required as a cofactor. It depends on Ni(2+) as a cofactor.

It catalyses the reaction 1,2-dihydroxy-5-(methylsulfanyl)pent-1-en-3-one + O2 = 3-(methylsulfanyl)propanoate + CO + formate + 2 H(+). It carries out the reaction 1,2-dihydroxy-5-(methylsulfanyl)pent-1-en-3-one + O2 = 4-methylsulfanyl-2-oxobutanoate + formate + 2 H(+). The protein operates within amino-acid biosynthesis; L-methionine biosynthesis via salvage pathway; L-methionine from S-methyl-5-thio-alpha-D-ribose 1-phosphate: step 5/6. Catalyzes 2 different reactions between oxygen and the acireductone 1,2-dihydroxy-3-keto-5-methylthiopentene (DHK-MTPene) depending upon the metal bound in the active site. Fe-containing acireductone dioxygenase (Fe-ARD) produces formate and 2-keto-4-methylthiobutyrate (KMTB), the alpha-ketoacid precursor of methionine in the methionine recycle pathway. Ni-containing acireductone dioxygenase (Ni-ARD) produces methylthiopropionate, carbon monoxide and formate, and does not lie on the methionine recycle pathway. This is Acireductone dioxygenase from Bacillus cereus (strain ZK / E33L).